An 85-amino-acid polypeptide reads, in one-letter code: MAKEELLEMRGKVVELLPNAMFRVELENGHEVLGHTAGKMRKNRIRVLVGDEVLCELTPYDLTKARITYRFMPGRGGPGQGPGPQ.

In terms of domain architecture, S1-like spans 1-72; it reads MAKEELLEMR…TKARITYRFM (72 aa).

Belongs to the IF-1 family. As to quaternary structure, component of the 30S ribosomal translation pre-initiation complex which assembles on the 30S ribosome in the order IF-2 and IF-3, IF-1 and N-formylmethionyl-tRNA(fMet); mRNA recruitment can occur at any time during PIC assembly.

Its subcellular location is the cytoplasm. Its function is as follows. One of the essential components for the initiation of protein synthesis. Stabilizes the binding of IF-2 and IF-3 on the 30S subunit to which N-formylmethionyl-tRNA(fMet) subsequently binds. Helps modulate mRNA selection, yielding the 30S pre-initiation complex (PIC). Upon addition of the 50S ribosomal subunit IF-1, IF-2 and IF-3 are released leaving the mature 70S translation initiation complex. This chain is Translation initiation factor IF-1, found in Erythrobacter litoralis (strain HTCC2594).